The sequence spans 160 residues: Ureidoglycolate lyase (160 aa).

It belongs to the ureidoglycolate lyase family. In terms of assembly, homodimer. It depends on Ni(2+) as a cofactor.

It catalyses the reaction (S)-ureidoglycolate = urea + glyoxylate. It functions in the pathway nitrogen metabolism; (S)-allantoin degradation. Functionally, catalyzes the catabolism of the allantoin degradation intermediate (S)-ureidoglycolate, generating urea and glyoxylate. Involved in the utilization of allantoin as nitrogen source. In Salmonella typhimurium (strain LT2 / SGSC1412 / ATCC 700720), this protein is Ureidoglycolate lyase.